The sequence spans 574 residues: Proline--tRNA ligase (574 aa).

Belongs to the class-II aminoacyl-tRNA synthetase family. ProS type 1 subfamily. As to quaternary structure, homodimer.

It localises to the cytoplasm. It carries out the reaction tRNA(Pro) + L-proline + ATP = L-prolyl-tRNA(Pro) + AMP + diphosphate. Its function is as follows. Catalyzes the attachment of proline to tRNA(Pro) in a two-step reaction: proline is first activated by ATP to form Pro-AMP and then transferred to the acceptor end of tRNA(Pro). As ProRS can inadvertently accommodate and process non-cognate amino acids such as alanine and cysteine, to avoid such errors it has two additional distinct editing activities against alanine. One activity is designated as 'pretransfer' editing and involves the tRNA(Pro)-independent hydrolysis of activated Ala-AMP. The other activity is designated 'posttransfer' editing and involves deacylation of mischarged Ala-tRNA(Pro). The misacylated Cys-tRNA(Pro) is not edited by ProRS. In Aeromonas hydrophila subsp. hydrophila (strain ATCC 7966 / DSM 30187 / BCRC 13018 / CCUG 14551 / JCM 1027 / KCTC 2358 / NCIMB 9240 / NCTC 8049), this protein is Proline--tRNA ligase.